The following is a 196-amino-acid chain: uncharacterized protein (196 aa).

It localises to the mitochondrion. This is an uncharacterized protein from Paramecium tetraurelia.